The chain runs to 231 residues: Large ribosomal subunit protein uL1 (231 aa).

Belongs to the universal ribosomal protein uL1 family. In terms of assembly, part of the 50S ribosomal subunit.

Its function is as follows. Binds directly to 23S rRNA. The L1 stalk is quite mobile in the ribosome, and is involved in E site tRNA release. Protein L1 is also a translational repressor protein, it controls the translation of the L11 operon by binding to its mRNA. This is Large ribosomal subunit protein uL1 from Mycoplasmopsis synoviae (strain 53) (Mycoplasma synoviae).